We begin with the raw amino-acid sequence, 233 residues long: Octanoyltransferase (233 aa).

Residues 34–212 enclose the BPL/LPL catalytic domain; that stretch reads PDRPDVLLLL…AFAQTFELDL (179 aa). Substrate contacts are provided by residues 76–83, 143–145, and 156–158; these read RGGEVTHH, AIG, and GFA. Cys-174 (acyl-thioester intermediate) is an active-site residue.

Belongs to the LipB family.

The protein resides in the cytoplasm. The enzyme catalyses octanoyl-[ACP] + L-lysyl-[protein] = N(6)-octanoyl-L-lysyl-[protein] + holo-[ACP] + H(+). The protein operates within protein modification; protein lipoylation via endogenous pathway; protein N(6)-(lipoyl)lysine from octanoyl-[acyl-carrier-protein]: step 1/2. Its function is as follows. Catalyzes the transfer of endogenously produced octanoic acid from octanoyl-acyl-carrier-protein onto the lipoyl domains of lipoate-dependent enzymes. Lipoyl-ACP can also act as a substrate although octanoyl-ACP is likely to be the physiological substrate. The polypeptide is Octanoyltransferase (Synechococcus elongatus (strain ATCC 33912 / PCC 7942 / FACHB-805) (Anacystis nidulans R2)).